The primary structure comprises 350 residues: Transmembrane protein 185B (350 aa).

The next 7 helical transmembrane spans lie at 16–36 (LIYT…DGII), 41–61 (WAVF…ASVG), 81–101 (FKAM…EVLV), 111–131 (FWLL…AACV), 168–188 (WLVV…VVLY), 211–231 (VTMA…EVLL), and 240–260 (TFSY…LMAT).

This sequence belongs to the TMEM185 family.

The protein resides in the membrane. This chain is Transmembrane protein 185B (TMEM185B), found in Homo sapiens (Human).